The chain runs to 381 residues: ATP synthase subunit a (381 aa).

The interval 24 to 73 (PVAAPVEQHGQAPEAAPDAHGSPAGEPGAAVEAHAAAAEHGEAAGHEGGH) is disordered. Low complexity predominate over residues 47–59 (AGEPGAAVEAHAA). A compositionally biased stretch (basic and acidic residues) spans 60-73 (AAEHGEAAGHEGGH). Transmembrane regions (helical) follow at residues 128–148 (KHVV…LGAV), 190–210 (LVTA…PFSA), 215–235 (NLSV…YAAI), 255–275 (LAPL…TKPF), 290–310 (FVIL…VAFG), and 316–336 (LSIF…FTML). Residues 351-360 (DHGHAEEHGH) are compositionally biased toward basic and acidic residues. Residues 351-381 (DHGHAEEHGHAGPAAGSEHGSHVAGASPGHG) are disordered.

It belongs to the ATPase A chain family. F-type ATPases have 2 components, CF(1) - the catalytic core - and CF(0) - the membrane proton channel. CF(1) has five subunits: alpha(3), beta(3), gamma(1), delta(1), epsilon(1). CF(0) has three main subunits: a(1), b(2) and c(9-12). The alpha and beta chains form an alternating ring which encloses part of the gamma chain. CF(1) is attached to CF(0) by a central stalk formed by the gamma and epsilon chains, while a peripheral stalk is formed by the delta and b chains.

The protein localises to the cell inner membrane. Functionally, key component of the proton channel; it plays a direct role in the translocation of protons across the membrane. This is ATP synthase subunit a from Anaeromyxobacter dehalogenans (strain 2CP-C).